The primary structure comprises 347 residues: FK506-binding protein-like (347 aa).

The segment at 1 to 36 (METSLISPMKENNTAQPQQREENTQQNLNAAVPIKQ) is disordered. At Thr-3 the chain carries Phosphothreonine. TPR repeat units follow at residues 208–241 (AKEEHRRGTELFRAGNPQGAARCYGRALRLLLTL), 250–283 (TILHANLAACQLLLGHPQLAAQSCDRVLEREPGH), and 284–317 (LKALYRRGVAQAALGDLDKATADLKKVLAVDPKN).

As to quaternary structure, forms a ternary complex with CDKN1A/p21 and HSP90AB1/Hsp90.

May be involved in response to X-ray. Regulates p21 protein stability by binding to Hsp90 and p21. The protein is FK506-binding protein-like (Fkbpl) of Rattus norvegicus (Rat).